A 174-amino-acid chain; its full sequence is ATP-dependent protease subunit HslV (174 aa).

Threonine 2 is a catalytic residue. Na(+)-binding residues include glycine 157, aspartate 160, and threonine 163.

This sequence belongs to the peptidase T1B family. HslV subfamily. As to quaternary structure, a double ring-shaped homohexamer of HslV is capped on each side by a ring-shaped HslU homohexamer. The assembly of the HslU/HslV complex is dependent on binding of ATP.

The protein resides in the cytoplasm. The enzyme catalyses ATP-dependent cleavage of peptide bonds with broad specificity.. With respect to regulation, allosterically activated by HslU binding. Functionally, protease subunit of a proteasome-like degradation complex believed to be a general protein degrading machinery. This Aliivibrio fischeri (strain MJ11) (Vibrio fischeri) protein is ATP-dependent protease subunit HslV.